A 223-amino-acid polypeptide reads, in one-letter code: Killer cell lectin-like receptor subfamily B member 1B allele B (223 aa).

The Cytoplasmic segment spans residues 1-43 (MDSTTLVYADLNLARIQEPKHDSPPSLSPDTCRCPRWHRLALK). The short motif at 6-11 (LVYADL) is the ITIM motif element. An LCK-binding motif motif is present at residues 32–35 (CRCP). Residues 44–64 (FGCAGLILLVLVVIGLCVLVL) form a helical; Signal-anchor for type II membrane protein membrane-spanning segment. Residues 65 to 223 (SVQKSSVQKI…LNHETPCNDS (159 aa)) lie on the Extracellular side of the membrane. A C-type lectin domain is found at 101 to 211 (HRDKCFHVSQ…CSSDNRWICQ (111 aa)). 2 disulfides stabilise this stretch: Cys122–Cys210 and Cys189–Cys202.

In terms of assembly, homodimer; disulfide-linked. Interacts with tyrosine kinase LCK. Binds PTPN6/SHP-1 in a phosphorylation-dependent manner. In terms of tissue distribution, expressed in NK cells and a subset of T-cells.

Its subcellular location is the membrane. Receptor for CLEC2D/OCIL. Ligand-binding contributes to inhibition of cytotoxic natural killer (NK) cells. May mediate MHC class I-independent 'missing-self' recognition of allografts, tumor cells and virus-infected cells. This is Killer cell lectin-like receptor subfamily B member 1B allele B (Klrb1b) from Mus musculus (Mouse).